A 47-amino-acid polypeptide reads, in one-letter code: Large ribosomal subunit protein bL33A (47 aa).

Belongs to the bacterial ribosomal protein bL33 family.

This Staphylococcus aureus (strain JH1) protein is Large ribosomal subunit protein bL33A.